Consider the following 377-residue polypeptide: Enoyl reductase cheB (377 aa).

Positions 18–361 (GGSLVIARDV…REISAEKLVV (344 aa)) are enoyl reductase (ER) domain. 49 to 52 (CDFK) provides a ligand contact to NADP(+). Position 137-144 (137-144 (PCCIATMG)) interacts with substrate. NADP(+) is bound by residues 173–176 (SSSV), 200–203 (SPKN), Tyr218, 265–266 (LE), and Thr283. 285 to 289 (GAIII) provides a ligand contact to substrate. Residue 354–355 (IS) participates in NADP(+) binding.

The protein belongs to the zinc-containing alcohol dehydrogenase family. Requires heme as cofactor.

Its pathway is secondary metabolite biosynthesis. Its function is as follows. Enoyl reductase; part of the gene cluster that mediates the biosynthesis of chaetoglobosin A which has a unique inhibitory activity against actin polymerization in mammalian cells. Chaetoglobosin A and its intermediates are involved in the morphological differentiation of C.globosum. The first step of the pathway is the synthesis of prochaetoglobosin I via condensation of one acetyl-CoA, 8 malonyl-CoA, and a L-tryptophan molecule by the PKS-NRPS hybrid synthetase cheA, followed by reduction of backbone double bond to install desired geometry by the enoyl reductase cheB. Further multiple oxidation steps performed by the cytochrome P450 monooxygenases cheE and cheG, as well as by the FAD-linked oxidoreductase cheF, lead to the formation of chaetoglobosin A. Depending on the order of action of these reductases, distinct intermediates can be identified. Within the pathway, the cytochrome P450 monooxygenase cheE catalyzes a stereospecific epoxidation on prochaetoglobosin I, cytoglobosin D, and chaetoglobosin J intermediates. The FAD-linked oxidoreductase cheF performs dehydrogenation of the C-20 hydroxyl groups in the 20-dihyrochaetoglobosin A and cytoglobosin D intermediates. Finally, the cytochrome P450 monooxygenase cheG can catalyze the stereospecific dihydroxylation of prochaetoglobosin I and prochaetoglobosin IV at C-19 and C-20, respectively. The Diels-Alderase cheD may play a role in the post-PKS-NRPS biosynthetic steps catalyzing Diels-Alder cyclization. This is Enoyl reductase cheB from Chaetomium globosum (strain ATCC 6205 / CBS 148.51 / DSM 1962 / NBRC 6347 / NRRL 1970) (Soil fungus).